A 159-amino-acid chain; its full sequence is Small ribosomal subunit protein bS16 (159 aa).

Residues 102–119 (GIPEAAEEAPATESVAEA) are compositionally biased toward low complexity. The segment at 102 to 159 (GIPEAAEEAPATESVAEAEVADVPESELSEAATETAAAELSPPEAEVEKPQVEEAVEA) is disordered. Residues 120–129 (EVADVPESEL) show a composition bias toward acidic residues. Over residues 130 to 145 (SEAATETAAAELSPPE) the composition is skewed to low complexity.

Belongs to the bacterial ribosomal protein bS16 family.

This Synechococcus sp. (strain JA-2-3B'a(2-13)) (Cyanobacteria bacterium Yellowstone B-Prime) protein is Small ribosomal subunit protein bS16.